The sequence spans 201 residues: Thymidine kinase (201 aa).

ATP-binding positions include 9–16 and 87–90; these read SAMNAGKS and DECH. The Proton acceptor role is filled by Glu88. Positions 145, 147, 182, and 185 each coordinate Zn(2+).

This sequence belongs to the thymidine kinase family. In terms of assembly, homotetramer.

It is found in the cytoplasm. The enzyme catalyses thymidine + ATP = dTMP + ADP + H(+). The polypeptide is Thymidine kinase (Photorhabdus laumondii subsp. laumondii (strain DSM 15139 / CIP 105565 / TT01) (Photorhabdus luminescens subsp. laumondii)).